Consider the following 474-residue polypeptide: ATP synthase subunit beta (474 aa).

Residue 158–165 (GGAGVGKT) coordinates ATP.

This sequence belongs to the ATPase alpha/beta chains family. In terms of assembly, F-type ATPases have 2 components, CF(1) - the catalytic core - and CF(0) - the membrane proton channel. CF(1) has five subunits: alpha(3), beta(3), gamma(1), delta(1), epsilon(1). CF(0) has three main subunits: a(1), b(2) and c(9-12). The alpha and beta chains form an alternating ring which encloses part of the gamma chain. CF(1) is attached to CF(0) by a central stalk formed by the gamma and epsilon chains, while a peripheral stalk is formed by the delta and b chains.

The protein resides in the cell membrane. The enzyme catalyses ATP + H2O + 4 H(+)(in) = ADP + phosphate + 5 H(+)(out). Functionally, produces ATP from ADP in the presence of a proton gradient across the membrane. The catalytic sites are hosted primarily by the beta subunits. This chain is ATP synthase subunit beta, found in Tropheryma whipplei (strain Twist) (Whipple's bacillus).